Reading from the N-terminus, the 457-residue chain is Reticulon-like protein B18 (457 aa).

The disordered stretch occupies residues 94 to 183 (AAVTARRSKT…SPSSDQPQDV (90 aa)). Residues 124 to 136 (LRSEAMVDTKENT) are compositionally biased toward basic and acidic residues. The span at 149–163 (NQRKQKKLGRSKKEK) shows a compositional bias: basic residues. The span at 166–183 (SVPLLASPSPSSDQPQDV) shows a compositional bias: low complexity. In terms of domain architecture, Reticulon spans 195 to 385 (ISDLIMWRDV…AFWNLTSLKT (191 aa)). Transmembrane regions (helical) follow at residues 208-228 (TLWF…AKGF), 230-250 (FSVF…SFLS), 314-334 (YGYL…SFTI), and 377-397 (FWNL…VVVI). The segment at 407 to 457 (DSEDEEEKKQQEKTHPEQQKSPEDKSTSPRSAEEEQALVLVAETKAPKKLY) is disordered. Basic and acidic residues predominate over residues 413 to 439 (EKKQQEKTHPEQQKSPEDKSTSPRSAE).

The protein resides in the endoplasmic reticulum membrane. The sequence is that of Reticulon-like protein B18 (RTNLB18) from Arabidopsis thaliana (Mouse-ear cress).